The following is a 381-amino-acid chain: MWRSLGLALALCLLPSGGTESQDQSSLCKQPPAWSIRDQDPMLNSNGSVTVVALLQASUYLCILQASKLEDLRVKLKKEGYSNISYIVVNHQGISSRLKYTHLKNKVSEHIPVYQQEENQTDVWTLLNGSKDDFLIYDRCGRLVYHLGLPFSFLTFPYVEEAIKIAYCEKKCGNCSLTTLKDEDFCKRVSLATVDKTVETPSPHYHHEHHHNHGHQHLGSSELSENQQPGAPNAPTHPAPPGLHHHHKHKGQHRQGHPENRDMPASEDLQDLQKKLCRKRCINQLLCKLPTDSELAPRSUCCHCRHLIFEKTGSAITUQCKENLPSLCSUQGLRAEENITESCQURLPPAAUQISQQLIPTEASASURUKNQAKKUEUPSN.

Residues 1–19 (MWRSLGLALALCLLPSGGT) form the signal peptide. The N-linked (GlcNAc...) asparagine glycan is linked to asparagine 46. A non-standard amino acid (selenocysteine) is located at residue selenocysteine 59. A glycan (N-linked (GlcNAc...) (complex) asparagine) is linked at asparagine 83. Residues asparagine 119, asparagine 128, and asparagine 174 are each glycosylated (N-linked (GlcNAc...) asparagine). Residues 200 to 268 (TPSPHYHHEH…ENRDMPASED (69 aa)) form a disordered region. Residues 204–216 (HYHHEHHHNHGHQ) are compositionally biased toward basic residues. Residues 218-230 (LGSSELSENQQPG) show a composition bias toward polar residues. Basic residues predominate over residues 243–255 (LHHHHKHKGQHRQ). Phosphoserine is present on serine 266. Non-standard amino acids (selenocysteine) are located at selenocysteine 300, selenocysteine 318, and selenocysteine 330. Asparagine 338 is a glycosylation site (N-linked (GlcNAc...) asparagine). Residues selenocysteine 345, selenocysteine 352, selenocysteine 367, selenocysteine 369, selenocysteine 376, and selenocysteine 378 are each a non-standard amino acid (selenocysteine). The interval 355–381 (SQQLIPTEASASURUKNQAKKUEUPSN) is disordered.

The protein belongs to the selenoprotein P family. In terms of processing, phosphorylation sites are present in the extracellular medium. As to expression, made in the liver and heart and secreted into the plasma. It is also found in the kidney.

The protein resides in the secreted. Functionally, might be responsible for some of the extracellular antioxidant defense properties of selenium or might be involved in the transport of selenium. May supply selenium to tissues such as brain and testis. This is Selenoprotein P from Homo sapiens (Human).